We begin with the raw amino-acid sequence, 494 residues long: Guanosine-5'-triphosphate,3'-diphosphate pyrophosphatase (494 aa).

It belongs to the GppA/Ppx family. GppA subfamily.

It carries out the reaction guanosine 3'-diphosphate 5'-triphosphate + H2O = guanosine 3',5'-bis(diphosphate) + phosphate + H(+). It functions in the pathway purine metabolism; ppGpp biosynthesis; ppGpp from GTP: step 2/2. Its function is as follows. Catalyzes the conversion of pppGpp to ppGpp. Guanosine pentaphosphate (pppGpp) is a cytoplasmic signaling molecule which together with ppGpp controls the 'stringent response', an adaptive process that allows bacteria to respond to amino acid starvation, resulting in the coordinated regulation of numerous cellular activities. This Shigella dysenteriae serotype 1 (strain Sd197) protein is Guanosine-5'-triphosphate,3'-diphosphate pyrophosphatase.